A 174-amino-acid chain; its full sequence is Flavodoxin 1 (174 aa).

A Flavodoxin-like domain is found at 4–168; that stretch reads IGIFYGSSSG…RLERWIAVLQ (165 aa). FMN is bound by residues 10 to 14 and 89 to 122; these read SSSGV and LFGA…ALVG.

It depends on FMN as a cofactor.

Flavodoxins are low-potential electron donors to a number of redox enzymes. AvFld 1 is able to donate electrons to the assimilatory nitrate reductase of A.vinelandii to catalyze the reduction of nitrate to nitrite. This Azotobacter vinelandii (strain DJ / ATCC BAA-1303) protein is Flavodoxin 1.